We begin with the raw amino-acid sequence, 332 residues long: Melanocortin receptor 4 (332 aa).

At 1-43 the chain is on the extracellular side; sequence MVNSTHRGMHASLHLWNRSSHRLHSNASESLGKGYSDGGCYEQ. Residues N3, N17, and N26 are each glycosylated (N-linked (GlcNAc...) asparagine). 2 cysteine pairs are disulfide-bonded: C40-C279 and C271-C277. A helical membrane pass occupies residues 44 to 69; the sequence is LFVSPEVFVTLGVISLLENILVIVAI. At 70–81 the chain is on the cytoplasmic side; sequence AKNKNLHSPMYF. Residues 82–106 traverse the membrane as a helical segment; that stretch reads FICSLAVADMLVSVSNGSETIVITL. Residues E100, D122, and D126 each coordinate Ca(2+). The Extracellular portion of the chain corresponds to 107-123; the sequence is LNSTDTDTQSFTVNIDN. The helical transmembrane segment at 124–145 threads the bilayer; sequence VIDSVICSSLLASICSLLSIAV. Residues 146-165 are Cytoplasmic-facing; sequence DRYFTIFYALQYHNIMTVKR. The helical transmembrane segment at 166 to 186 threads the bilayer; sequence VRIIISCIWAACTVSGILFII. The Extracellular segment spans residues 187-191; the sequence is YSDSS. Residues 192–215 traverse the membrane as a helical segment; the sequence is AVIICLITMFFTMLALMASLYVHM. Topologically, residues 216–248 are cytoplasmic; that stretch reads FLMARLHIKRIAVLPGTGAIRQGANMKGAITLT. Residues 249-271 traverse the membrane as a helical segment; that stretch reads ILIGVFVVCWAPFFLHLIFYISC. The Extracellular segment spans residues 272 to 280; that stretch reads PQNPYCVCF. The helical transmembrane segment at 281-304 threads the bilayer; the sequence is MSHFNLYLILIMCNSVIDPLIYAL. At 305 to 332 the chain is on the cytoplasmic side; that stretch reads RSQELRKTFKEIICCYPLGGLCDLSSRY. C318 is lipidated: S-palmitoyl cysteine.

This sequence belongs to the G-protein coupled receptor 1 family. As to quaternary structure, homodimer; disulfide-linked, also forms higher order oligomers. Interacts with GNAS. Interacts with ATRNL1. Interacts with MGRN1; this interaction competes with GNAS-binding and thus inhibits agonist-induced cAMP production. Interacts with MRAP and MRAP2; these associated factors increase ligand-sensitivity and generation of cAMP.

The protein localises to the cell membrane. Functionally, hormone receptor that acts as a key component of the leptin-melanocortin pathway at the intersection of homeostatic maintenance of energetic state. Plays a role in regulating food intake: activation by a stimulating hormone such as anorexigenic alpha-melanocyte stimulating hormone (alpha-MSH) inhibits appetite, whereas binding to a natural antagonist like Agouti-related protein/AGRP promotes appetite. G-protein-coupled receptor that activates conventional Galphas signaling leading to induction of anorexogenic signaling in the hypothalamus to result in negative energy balance. Regulates the firing activity of neurons from the hypothalamus by alpha-MSH and AGRP independently of Galphas signaling by ligand-induced coupling of closure of inwardly rectifying potassium channel KCNJ13. In intestinal epithelial cells, plays a role in the inhibition of hepatic glucose production via nesfatin-1/NUCB2 leading to increased cyclic adenosine monophosphate (cAMP) levels and glucagon-like peptide 1 (GLP-1) secretion in the intestinal epithelium. This Macaca fascicularis (Crab-eating macaque) protein is Melanocortin receptor 4 (MC4R).